A 590-amino-acid chain; its full sequence is Myo-inositol transporter 3 (590 aa).

Residues 1-26 are compositionally biased toward basic and acidic residues; the sequence is MRTTHIEDRDNNSLENKHTDHIEGVE. The interval 1 to 40 is disordered; sequence MRTTHIEDRDNNSLENKHTDHIEGVENGKGTQEPPSPSGF. Residues 1–57 are Cytoplasmic-facing; the sequence is MRTTHIEDRDNNSLENKHTDHIEGVENGKGTQEPPSPSGFGGHLIDENLVHVEGEDK. A helical transmembrane segment spans residues 58–78; it reads VTWYLCFLISASAIAGFLFGY. Residues 79–105 are Extracellular-facing; sequence DTGVVGVALPLVGTDLGGNELNSSQQE. N-linked (GlcNAc...) asparagine glycosylation is present at Asn100. The helical transmembrane segment at 106–126 threads the bilayer; it reads IITAGTTIGAIFGSAILGGWG. Residues 127 to 132 lie on the Cytoplasmic side of the membrane; sequence DHLGRK. Residues 133–153 form a helical membrane-spanning segment; it reads MAILISDVFFTVGAVIIASSY. Residues 154-157 are Extracellular-facing; sequence SVPQ. Residues 158 to 178 form a helical membrane-spanning segment; it reads IIVGRIVLGVGVGGAAVIAPL. The Cytoplasmic portion of the chain corresponds to 179–192; it reads FITETAPTAVRGRC. The chain crosses the membrane as a helical span at residues 193 to 213; it reads IGVNAFFIPFGQLVADSIGAG. Residues 214–222 are Extracellular-facing; that stretch reads VQNMHGGWR. The helical transmembrane segment at 223–243 threads the bilayer; sequence LLFALGAVPSLIQLLLFHYLP. At 244–325 the chain is on the cytoplasmic side; it reads ESPRILIVKG…AVSVLQAAGQ (82 aa). The chain crosses the membrane as a helical span at residues 326-346; that stretch reads LCGFNTLLYYAGTLFGLLGLS. Topologically, residues 347–349 are extracellular; that stretch reads NPA. The helical transmembrane segment at 350 to 370 threads the bilayer; the sequence is LGGLIPAGTNAVFVLIGMSTV. Residues 371–376 lie on the Cytoplasmic side of the membrane; the sequence is DKIGRR. Residues 377-397 traverse the membrane as a helical segment; sequence GLLLVGVPVLLLGLVWNIIGF. Residues 398-420 are Extracellular-facing; the sequence is YYMCKPTGGFLDTSYSYDTTNVG. Residues 421–441 form a helical membrane-spanning segment; it reads IVIGGIVFYVAGFGLTYSHLV. Over 442–455 the chain is Cytoplasmic; that stretch reads WYQAEYLALEVRSM. Residues 456–476 traverse the membrane as a helical segment; sequence GSGVATTVCWIANLVVSVSYL. Residues 477–485 lie on the Extracellular side of the membrane; it reads SELETMTPS. Residues 486 to 506 traverse the membrane as a helical segment; sequence GTYGFYLGLSVIAFVFVVFCF. The Cytoplasmic portion of the chain corresponds to 507–590; that stretch reads PETKQLSIDE…GGKRKPQVLV (84 aa).

The protein belongs to the major facilitator superfamily. Sugar transporter (TC 2.A.1.1) family.

The protein localises to the cell membrane. It catalyses the reaction myo-inositol(out) + H(+)(out) = myo-inositol(in) + H(+)(in). Its function is as follows. Transporter for myo-inositol. In Cryptococcus neoformans var. grubii serotype A (strain H99 / ATCC 208821 / CBS 10515 / FGSC 9487) (Filobasidiella neoformans var. grubii), this protein is Myo-inositol transporter 3.